The primary structure comprises 156 residues: Gamma-L-glutamyl-butirosin B gamma-glutamyl cyclotransferase (156 aa).

24-27 (YGTL) provides a ligand contact to substrate. Glu89 acts as the Proton acceptor in catalysis.

This sequence belongs to the gamma-glutamylcyclotransferase family.

It catalyses the reaction gamma-L-glutamyl-butirosin B = butirosin B + 5-oxo-L-proline. Its pathway is antibiotic biosynthesis; butirosin biosynthesis. Functionally, cyclotransferase that catalyzes the last step in the biosynthesis of the aminoglycoside antibiotic butirosin B. Cleaves the amide bond via transamidation using the alpha-amine of the terminal gamma-L-glutamate of the side chain, releasing it as the cyclic 5-oxoproline. This is Gamma-L-glutamyl-butirosin B gamma-glutamyl cyclotransferase (btrG) from Niallia circulans (Bacillus circulans).